The primary structure comprises 118 residues: Small ribosomal subunit protein uS13 (118 aa).

The interval 93–118 is disordered; it reads RGLPVRGQRTKTNARTRKGPRKPIRK.

It belongs to the universal ribosomal protein uS13 family. In terms of assembly, part of the 30S ribosomal subunit. Forms a loose heterodimer with protein S19. Forms two bridges to the 50S subunit in the 70S ribosome.

Functionally, located at the top of the head of the 30S subunit, it contacts several helices of the 16S rRNA. In the 70S ribosome it contacts the 23S rRNA (bridge B1a) and protein L5 of the 50S subunit (bridge B1b), connecting the 2 subunits; these bridges are implicated in subunit movement. Contacts the tRNAs in the A and P-sites. The polypeptide is Small ribosomal subunit protein uS13 (Pseudomonas syringae pv. tomato (strain ATCC BAA-871 / DC3000)).